Consider the following 65-residue polypeptide: Defensin-B2 (65 aa).

Residues 1-23 (MEARVLLLCAVLFLLVHTPPAAG) form the signal peptide. 3 cysteine pairs are disulfide-bonded: Cys29-Cys56, Cys36-Cys50, and Cys40-Cys57.

Belongs to the beta-defensin family. As to expression, lowly expressed in spleen, and lung.

It is found in the secreted. In terms of biological role, has antimicrobial activity. This Ornithorhynchus anatinus (Duckbill platypus) protein is Defensin-B2.